Consider the following 274-residue polypeptide: Light-independent protochlorophyllide reductase iron-sulfur ATP-binding protein (274 aa).

ATP-binding positions include 12-17 (GIGKST) and lysine 41. Residue serine 16 participates in Mg(2+) binding. Positions 97 and 131 each coordinate [4Fe-4S] cluster.

It belongs to the NifH/BchL/ChlL family. In terms of assembly, homodimer. Protochlorophyllide reductase is composed of three subunits; BchL, BchN and BchB. The cofactor is [4Fe-4S] cluster.

The catalysed reaction is chlorophyllide a + oxidized 2[4Fe-4S]-[ferredoxin] + 2 ADP + 2 phosphate = protochlorophyllide a + reduced 2[4Fe-4S]-[ferredoxin] + 2 ATP + 2 H2O. It participates in porphyrin-containing compound metabolism; bacteriochlorophyll biosynthesis (light-independent). Functionally, component of the dark-operative protochlorophyllide reductase (DPOR) that uses Mg-ATP and reduced ferredoxin to reduce ring D of protochlorophyllide (Pchlide) to form chlorophyllide a (Chlide). This reaction is light-independent. The L component serves as a unique electron donor to the NB-component of the complex, and binds Mg-ATP. This is Light-independent protochlorophyllide reductase iron-sulfur ATP-binding protein from Chloroherpeton thalassium (strain ATCC 35110 / GB-78).